The primary structure comprises 324 residues: Beta-ketoacyl-[acyl-carrier-protein] synthase III (324 aa).

The active site involves C112. The segment at 181–202 (TDGSRGQNLTSGNNPLRSPFSD) is disordered. Positions 184 to 196 (SRGQNLTSGNNPL) are enriched in polar residues. H249 is an active-site residue. An ACP-binding region spans residues 250 to 254 (QANRR). The active site involves N279.

This sequence belongs to the thiolase-like superfamily. FabH family. Homodimer.

It is found in the cytoplasm. The enzyme catalyses malonyl-[ACP] + acetyl-CoA + H(+) = 3-oxobutanoyl-[ACP] + CO2 + CoA. The protein operates within lipid metabolism; fatty acid biosynthesis. In terms of biological role, catalyzes the condensation reaction of fatty acid synthesis by the addition to an acyl acceptor of two carbons from malonyl-ACP. Catalyzes the first condensation reaction which initiates fatty acid synthesis and may therefore play a role in governing the total rate of fatty acid production. Possesses both acetoacetyl-ACP synthase and acetyl transacylase activities. Its substrate specificity determines the biosynthesis of branched-chain and/or straight-chain of fatty acids. The protein is Beta-ketoacyl-[acyl-carrier-protein] synthase III of Streptococcus uberis (strain ATCC BAA-854 / 0140J).